The sequence spans 238 residues: Probable transcriptional regulatory protein ABC1956 (238 aa).

This sequence belongs to the TACO1 family. YeeN subfamily.

It localises to the cytoplasm. This is Probable transcriptional regulatory protein ABC1956 from Shouchella clausii (strain KSM-K16) (Alkalihalobacillus clausii).